The sequence spans 430 residues: Corticosteroid-binding globulin (430 aa).

The N-terminal stretch at 1-22 (MLLTLYTCLLWLSTSGLWTIQA) is a signal peptide. Asn-119, Asn-175, and Asn-243 each carry an N-linked (GlcNAc...) asparagine glycan. Gln-253 serves as a coordination point for cortisol. Residue Asn-259 is glycosylated (N-linked (GlcNAc...) asparagine). Gln-285 serves as a coordination point for cortisol. A glycan (N-linked (GlcNAc...) asparagine) is linked at Asn-326. Trp-392 contacts cortisol.

The protein belongs to the serpin family. As to expression, expressed by the liver; secreted in plasma.

It is found in the secreted. In terms of biological role, major transport protein for glucocorticoids and progestins in the blood of almost all vertebrate species. The sequence is that of Corticosteroid-binding globulin (SERPINA6) from Ovis aries (Sheep).